The primary structure comprises 416 residues: Lipase A (416 aa).

A signal peptide spans 1–32 (MRLAPQKPLLLSTVLHLLLSIWMLGFASLAGA). 2 disulfide bridges follow: Cys67/Cys391 and Cys177/Cys180. N-linked (GlcNAc...) asparagine glycosylation occurs at Asn179. Ser219 (nucleophile) is an active-site residue. Catalysis depends on charge relay system residues Asp287 and His381.

It belongs to the AB hydrolase superfamily. Lipase family. Post-translationally, glycosylated.

It localises to the secreted. It carries out the reaction Deacetylation of xylans and xylo-oligosaccharides.. The enzyme catalyses a triacylglycerol + H2O = a diacylglycerol + a fatty acid + H(+). Its function is as follows. Lipolytic enzyme that possesses both lipase and acetylxylan esterase activity. Active towards p-nitrophenol esters of various carbon chain length with preference for medium-chain fatty acids (C-8). Also highly active on the acetylated compounds xylose tetra-acetate and oat spelt xylan. The polypeptide is Lipase A (Sodiomyces alcalophilus (Acremonium alcalophilum)).